Consider the following 125-residue polypeptide: Large ribosomal subunit protein bL12 (125 aa).

Belongs to the bacterial ribosomal protein bL12 family. In terms of assembly, homodimer. Part of the ribosomal stalk of the 50S ribosomal subunit. Forms a multimeric L10(L12)X complex, where L10 forms an elongated spine to which 2 to 4 L12 dimers bind in a sequential fashion. Binds GTP-bound translation factors.

Its function is as follows. Forms part of the ribosomal stalk which helps the ribosome interact with GTP-bound translation factors. Is thus essential for accurate translation. In Campylobacter jejuni (strain RM1221), this protein is Large ribosomal subunit protein bL12.